Here is a 497-residue protein sequence, read N- to C-terminus: Uridine 5'-monophosphate synthase (497 aa).

The segment at Thr-8–Asn-226 is OPRTase. Residues Leu-227–Tyr-232 are domain linker. The tract at residues Val-233–Ser-496 is OMPdecase. UMP contacts are provided by residues Asp-271 and Lys-293–His-295. Residue Lys-293 coordinates orotidine 5'-phosphate. Active-site for OMPdecase activity residues include Asp-324, Lys-326, and Asp-329. Residues Lys-326, Asp-329, Thr-333, Ser-387, Gln-446–Trp-448, and Gly-466–Arg-467 each bind orotidine 5'-phosphate. UMP contacts are provided by residues Asp-329, Thr-333, Ser-387, Gln-446–Trp-448, and Gly-466–Arg-467.

This sequence in the N-terminal section; belongs to the purine/pyrimidine phosphoribosyltransferase family. In the C-terminal section; belongs to the OMP decarboxylase family. In terms of tissue distribution, expressed in intestine and in neurons near the nerve ring and rectum.

The protein resides in the cytoplasm. It carries out the reaction orotidine 5'-phosphate + diphosphate = orotate + 5-phospho-alpha-D-ribose 1-diphosphate. It catalyses the reaction orotidine 5'-phosphate + H(+) = UMP + CO2. The protein operates within pyrimidine metabolism; UMP biosynthesis via de novo pathway; UMP from orotate: step 1/2. It participates in pyrimidine metabolism; UMP biosynthesis via de novo pathway; UMP from orotate: step 2/2. Bifunctional enzyme which catalyzes the formation of UMP from orotate in the de novo pathway of pyrimidine biosynthesis. May also form UMP from uracil. Regulates the size of gut granules during embryonic development. Involved in resistance to DNA damaging agents including UV-C and X-ray radiation. The chain is Uridine 5'-monophosphate synthase from Caenorhabditis elegans.